The following is a 131-amino-acid chain: D-ribose pyranase (131 aa).

The Proton donor role is filled by H20. Residues D28, H98, and 120–122 (YSN) contribute to the substrate site.

This sequence belongs to the RbsD / FucU family. RbsD subfamily. In terms of assembly, homodecamer.

It is found in the cytoplasm. It catalyses the reaction beta-D-ribopyranose = beta-D-ribofuranose. It functions in the pathway carbohydrate metabolism; D-ribose degradation; D-ribose 5-phosphate from beta-D-ribopyranose: step 1/2. In terms of biological role, catalyzes the interconversion of beta-pyran and beta-furan forms of D-ribose. The sequence is that of D-ribose pyranase from Lactobacillus gasseri (strain ATCC 33323 / DSM 20243 / BCRC 14619 / CIP 102991 / JCM 1131 / KCTC 3163 / NCIMB 11718 / NCTC 13722 / AM63).